The sequence spans 291 residues: tRNA dimethylallyltransferase (291 aa).

Residue glycine 5–serine 12 participates in ATP binding. Substrate is bound at residue threonine 7 to serine 12. The tract at residues aspartate 30 to glutamine 33 is interaction with substrate tRNA.

The protein belongs to the IPP transferase family. As to quaternary structure, monomer. The cofactor is Mg(2+).

The catalysed reaction is adenosine(37) in tRNA + dimethylallyl diphosphate = N(6)-dimethylallyladenosine(37) in tRNA + diphosphate. Its function is as follows. Catalyzes the transfer of a dimethylallyl group onto the adenine at position 37 in tRNAs that read codons beginning with uridine, leading to the formation of N6-(dimethylallyl)adenosine (i(6)A). The polypeptide is tRNA dimethylallyltransferase (Frankia casuarinae (strain DSM 45818 / CECT 9043 / HFP020203 / CcI3)).